The following is a 306-amino-acid chain: Ribosomal RNA small subunit methyltransferase H (306 aa).

S-adenosyl-L-methionine contacts are provided by residues 33–35 (GGY), Asp-51, Phe-78, Asp-96, and Gln-103.

It belongs to the methyltransferase superfamily. RsmH family.

It is found in the cytoplasm. The catalysed reaction is cytidine(1402) in 16S rRNA + S-adenosyl-L-methionine = N(4)-methylcytidine(1402) in 16S rRNA + S-adenosyl-L-homocysteine + H(+). In terms of biological role, specifically methylates the N4 position of cytidine in position 1402 (C1402) of 16S rRNA. In Rickettsia typhi (strain ATCC VR-144 / Wilmington), this protein is Ribosomal RNA small subunit methyltransferase H.